Here is a 248-residue protein sequence, read N- to C-terminus: Probable transcriptional regulatory protein Noc_0137 (248 aa).

Belongs to the TACO1 family.

Its subcellular location is the cytoplasm. This chain is Probable transcriptional regulatory protein Noc_0137, found in Nitrosococcus oceani (strain ATCC 19707 / BCRC 17464 / JCM 30415 / NCIMB 11848 / C-107).